A 116-amino-acid chain; its full sequence is MDDLMKDRIDLLIDYIMKHCLWQFHSRSWDRKRQNEGILTKTTQLLCDEPVDLGTPADKCYWVDAVCLADAYKSRYPWLKTMDKDDIKALMGALHERLDHLTITGSLNLELTDQHY.

In terms of assembly, hexamer of two alpha, two beta, and two delta chains. Requires iron-sulfur cluster as cofactor.

The catalysed reaction is N2 + 8 reduced [2Fe-2S]-[ferredoxin] + 16 ATP + 16 H2O = H2 + 8 oxidized [2Fe-2S]-[ferredoxin] + 2 NH4(+) + 16 ADP + 16 phosphate + 6 H(+). Functionally, the key enzymatic reactions in nitrogen fixation are catalyzed by the nitrogenase complex, which has 2 components: the iron protein (component 2) and a component 1 which is either a molybdenum-iron protein, a vanadium-iron, or an iron-iron protein. The protein is Nitrogenase iron-iron protein delta chain (anfG) of Rhodospirillum rubrum.